The following is a 351-amino-acid chain: Protein-glutamate methylesterase/protein-glutamine glutaminase 2 (351 aa).

The Response regulatory domain maps to 4 to 121 (KVLVVDDSAL…PQDFNEYQDL (118 aa)). D55 is modified (4-aspartylphosphate). The region spanning 156–348 (RVINTQLVAI…DKMLNYLASL (193 aa)) is the CheB-type methylesterase domain. Active-site residues include S168, H194, and D290.

It belongs to the CheB family. In terms of processing, phosphorylated by CheA. Phosphorylation of the N-terminal regulatory domain activates the methylesterase activity.

It is found in the cytoplasm. It carries out the reaction [protein]-L-glutamate 5-O-methyl ester + H2O = L-glutamyl-[protein] + methanol + H(+). The enzyme catalyses L-glutaminyl-[protein] + H2O = L-glutamyl-[protein] + NH4(+). Involved in chemotaxis. Part of a chemotaxis signal transduction system that modulates chemotaxis in response to various stimuli. Catalyzes the demethylation of specific methylglutamate residues introduced into the chemoreceptors (methyl-accepting chemotaxis proteins or MCP) by CheR. Also mediates the irreversible deamidation of specific glutamine residues to glutamic acid. This is Protein-glutamate methylesterase/protein-glutamine glutaminase 2 from Shewanella sp. (strain MR-7).